We begin with the raw amino-acid sequence, 190 residues long: Dynein axonemal light chain 1 (190 aa).

N-acetylalanine is present on A2. LRR repeat units lie at residues 49 to 70 (NCEKLSLSTNCIEKIANLNGLK), 71 to 92 (NLRILSLGRNNIKNLNGLEAVG), 94 to 115 (TLEELWISYNFIEKLKGIHVMK), and 116 to 137 (KLKILYMSNNLVKDWAEFLKLA). S56 carries the phosphoserine modification. The region spanning 150 to 190 (NPLEEKHSAEGNWIDEATKRVPKLKKLDGTPVIKEDEEEES) is the LRRCT domain.

Belongs to the dynein light chain LC1-type family. In terms of assembly, interacts with ZMYND10 (via C-terminus). Interacts with DNAH5, a outer arm dynein heavy chain. Interacts with tubulin located within the A-tubule of the outer doublets in a ATP-independent manner. Expressed in the respiratory epithelium of the upper airways and the ependymal cells lining the brain ventricles.

It is found in the cytoplasm. The protein resides in the cytoskeleton. Its subcellular location is the cilium axoneme. Its function is as follows. Part of the multisubunit axonemal ATPase complexes that generate the force for cilia motility and govern beat frequency. Component of the outer arm dynein (ODA). May be involved in a mechanosensory feedback mechanism controlling ODA activity based on external conformational cues by tethering the outer arm dynein heavy chain (DNAH5) to the microtubule within the axoneme. Important for ciliary function in the airways and for the function of the cilia that produce the nodal flow essential for the determination of the left-right asymmetry. This Mus musculus (Mouse) protein is Dynein axonemal light chain 1 (Dnal1).